A 135-amino-acid polypeptide reads, in one-letter code: Kappa-casein (135 aa).

Thr96 carries O-linked (GalNAc...) threonine glycosylation. Position 114 is a phosphoserine; alternate (Ser114). Ser114 is a glycosylation site (O-linked (GalNAc...) serine; alternate). O-linked (GalNAc...) threonine glycosylation is present at Thr131. Ser132 is subject to Phosphoserine.

It belongs to the kappa-casein family. As to expression, mammary gland specific. Secreted in milk.

It localises to the secreted. Functionally, kappa-casein stabilizes micelle formation, preventing casein precipitation in milk. This Equus grevyi (Grevy's zebra) protein is Kappa-casein (CSN3).